We begin with the raw amino-acid sequence, 592 residues long: Aspartate--tRNA(Asp/Asn) ligase (592 aa).

Glutamate 173 lines the L-aspartate pocket. Residues 197–200 are aspartate; that stretch reads QLFK. Residue arginine 219 participates in L-aspartate binding. ATP-binding positions include 219 to 221 and glutamine 228; that span reads RDE. L-aspartate is bound at residue histidine 451. Residue glutamate 486 coordinates ATP. Arginine 493 provides a ligand contact to L-aspartate. Residue 538 to 541 coordinates ATP; it reads GLDR.

The protein belongs to the class-II aminoacyl-tRNA synthetase family. Type 1 subfamily. In terms of assembly, homodimer.

The protein resides in the cytoplasm. The catalysed reaction is tRNA(Asx) + L-aspartate + ATP = L-aspartyl-tRNA(Asx) + AMP + diphosphate. Its function is as follows. Aspartyl-tRNA synthetase with relaxed tRNA specificity since it is able to aspartylate not only its cognate tRNA(Asp) but also tRNA(Asn). Reaction proceeds in two steps: L-aspartate is first activated by ATP to form Asp-AMP and then transferred to the acceptor end of tRNA(Asp/Asn). The chain is Aspartate--tRNA(Asp/Asn) ligase from Alkalilimnicola ehrlichii (strain ATCC BAA-1101 / DSM 17681 / MLHE-1).